We begin with the raw amino-acid sequence, 400 residues long: Golgin-45 (400 aa).

Positions 1-36 are disordered; the sequence is MEKMTTLKSFESKGILTSTPIRGAGDGMETEEPPKS. A Tankyrase-binding motif motif is present at residues 22-26; that stretch reads RGAGD. S53 carries the phosphoserine modification. Residues 126 to 263 adopt a coiled-coil conformation; that stretch reads LSEVKKVLEK…LSEREQFRQE (138 aa). S356 carries the phosphoserine modification. An essential for interaction with GORASP2 region spans residues 394–400; the sequence is QGELLAL.

In terms of assembly, interacts with GORASP2. Interacts with the GTP-bound form of RAB2, but not with other Golgi Rab proteins. Identified in a complex with RAB2 and GORASP2. In terms of processing, ADP-ribosylated by tankyrase TNKS and TNKS2. Poly-ADP-ribosylated protein is recognized by RNF146, followed by ubiquitination. Ubiquitinated by RNF146 when poly-ADP-ribosylated, leading to its degradation.

The protein resides in the golgi apparatus membrane. Functionally, required for normal Golgi structure and for protein transport from the endoplasmic reticulum (ER) through the Golgi apparatus to the cell surface. This chain is Golgin-45, found in Rattus norvegicus (Rat).